We begin with the raw amino-acid sequence, 420 residues long: Putative competence-damage inducible protein (420 aa).

It belongs to the CinA family.

The sequence is that of Putative competence-damage inducible protein from Halalkalibacterium halodurans (strain ATCC BAA-125 / DSM 18197 / FERM 7344 / JCM 9153 / C-125) (Bacillus halodurans).